The primary structure comprises 438 residues: Delta(14)-sterol reductase ERG24 (438 aa).

The Lumenal segment spans residues 1 to 13; sequence MVSALNPRTTEFE. Residues 14-34 form a helical membrane-spanning segment; sequence FGGLIGALGISIGLPVFTIIL. Residues 35-71 lie on the Cytoplasmic side of the membrane; sequence NQMIRPDYFIKGFFQNFDIVELWNGIKPLRYYLGNRE. A helical membrane pass occupies residues 72-90; that stretch reads LWTVYCLWYGILAVLDVIL. Over 91 to 109 the chain is Lumenal; the sequence is PGRVMKGVQLRDGSKLSYK. A helical membrane pass occupies residues 110–127; the sequence is INGIAMSTTLVLVLAIRW. Residues 128–147 lie on the Cytoplasmic side of the membrane; that stretch reads KLTDGQLPELQYLYENHVSL. The chain crosses the membrane as a helical span at residues 148 to 172; that stretch reads CIISILFSFFLATYCYVASFIPLIF. The Lumenal segment spans residues 173–242; the sequence is KKNGNGKREK…LHHHYLKTGK (70 aa). Residues 243–263 traverse the membrane as a helical segment; sequence INDALVLVNFLQGFYIFDGVL. The Cytoplasmic segment spans residues 264–308; sequence NEEGVLTMMDITTDGFGFMLAFGDLSLVPFTYSLQARYLSVSPVE. Residues 309-328 form a helical membrane-spanning segment; sequence LGWVKVVGILAIMFLGFHIF. Over 329-368 the chain is Lumenal; sequence HSANKQKSEFRQGKLENLKSIQTKRGTKLLCDGWWAKSQH. NADP(+) is bound by residues lysine 335, arginine 339, leucine 358, tryptophan 363, 370 to 371, aspartate 410, 414 to 418, and tyrosine 425; these read NY and CRLKY. The helical transmembrane segment at 369 to 387 threads the bilayer; sequence INYFGDWLISLSWCLATWF. Topologically, residues 388-438 are cytoplasmic; that stretch reads QTPLTYYYSLYFATLLLHRQQRDEHKCRLKYGENWEEYERKVPYKIIPYVY.

It belongs to the ERG4/ERG24 family.

The protein localises to the membrane. The enzyme catalyses 4,4-dimethyl-5alpha-cholesta-8,24-dien-3beta-ol + NADP(+) = 4,4-dimethyl-5alpha-cholesta-8,14,24-trien-3beta-ol + NADPH + H(+). The protein operates within steroid biosynthesis; zymosterol biosynthesis; zymosterol from lanosterol: step 2/6. Its activity is regulated as follows. Inhibited by the morpholine antifungal drug fenpropimorph. Functionally, delta(14)-sterol reductase; part of the third module of ergosterol biosynthesis pathway that includes the late steps of the pathway. ERG24 reduces the C14=C15 double bond of 4,4-dimethyl-cholesta-8,14,24-trienol to produce 4,4-dimethyl-cholesta-8,24-dienol. The third module or late pathway involves the ergosterol synthesis itself through consecutive reactions that mainly occur in the endoplasmic reticulum (ER) membrane. Firstly, the squalene synthase ERG9 catalyzes the condensation of 2 farnesyl pyrophosphate moieties to form squalene, which is the precursor of all steroids. Squalene synthase is crucial for balancing the incorporation of farnesyl diphosphate (FPP) into sterol and nonsterol isoprene synthesis. Secondly, the squalene epoxidase ERG1 catalyzes the stereospecific oxidation of squalene to (S)-2,3-epoxysqualene, which is considered to be a rate-limiting enzyme in steroid biosynthesis. Then, the lanosterol synthase ERG7 catalyzes the cyclization of (S)-2,3 oxidosqualene to lanosterol, a reaction that forms the sterol core. In the next steps, lanosterol is transformed to zymosterol through a complex process involving various demethylation, reduction and desaturation reactions. The lanosterol 14-alpha-demethylase ERG11 (also known as CYP51) catalyzes C14-demethylation of lanosterol to produce 4,4'-dimethyl cholesta-8,14,24-triene-3-beta-ol, which is critical for ergosterol biosynthesis. The C-14 reductase ERG24 reduces the C14=C15 double bond of 4,4-dimethyl-cholesta-8,14,24-trienol to produce 4,4-dimethyl-cholesta-8,24-dienol. 4,4-dimethyl-cholesta-8,24-dienol is substrate of the C-4 demethylation complex ERG25-ERG26-ERG27 in which ERG25 catalyzes the three-step monooxygenation required for the demethylation of 4,4-dimethyl and 4alpha-methylsterols, ERG26 catalyzes the oxidative decarboxylation that results in a reduction of the 3-beta-hydroxy group at the C-3 carbon to an oxo group, and ERG27 is responsible for the reduction of the keto group on the C-3. ERG28 has a role as a scaffold to help anchor ERG25, ERG26 and ERG27 to the endoplasmic reticulum and ERG29 regulates the activity of the iron-containing C4-methylsterol oxidase ERG25. Then, the sterol 24-C-methyltransferase ERG6 catalyzes the methyl transfer from S-adenosyl-methionine to the C-24 of zymosterol to form fecosterol. The C-8 sterol isomerase ERG2 catalyzes the reaction which results in unsaturation at C-7 in the B ring of sterols and thus converts fecosterol to episterol. The sterol-C5-desaturase ERG3 then catalyzes the introduction of a C-5 double bond in the B ring to produce 5-dehydroepisterol. The C-22 sterol desaturase ERG5 further converts 5-dehydroepisterol into ergosta-5,7,22,24(28)-tetraen-3beta-ol by forming the C-22(23) double bond in the sterol side chain. Finally, ergosta-5,7,22,24(28)-tetraen-3beta-ol is substrate of the C-24(28) sterol reductase ERG4 to produce ergosterol. The chain is Delta(14)-sterol reductase ERG24 from Saccharomyces cerevisiae (strain ATCC 204508 / S288c) (Baker's yeast).